Reading from the N-terminus, the 125-residue chain is Cu-Zn superoxide dismutase-like protein OPG175 (125 aa).

An intrachain disulfide couples Cys52 to Cys102.

It belongs to the Cu-Zn superoxide dismutase family.

The protein resides in the virion. The protein localises to the host cytoplasm. Its function is as follows. Superoxide dismutase-like protein with no enzymatic activity. In Homo sapiens (Human), this protein is Cu-Zn superoxide dismutase-like protein OPG175 (OPG175).